A 2849-amino-acid chain; its full sequence is Immunoglobulin-like and fibronectin type III domain-containing protein 1 (2849 aa).

A disordered region spans residues 82–108; the sequence is AGSAARPDGSGSESLAASSSWKPRRRL. The span at 90–101 shows a compositional bias: low complexity; the sequence is GSGSESLAASSS. An Ig-like 1 domain is found at 187 to 277; it reads PDFKQKPVTL…GEATCSVRLT (91 aa). Positions 347 to 380 form a coiled coil; sequence IVDFRGMLRKLQEMKKEQEDRMAQYVSAIANLRH. Residues 468-557 form the Ig-like 2 domain; that stretch reads PRVVVPLAET…SSAWLVVEGG (90 aa). Disordered regions lie at residues 577-600, 652-760, 864-924, 962-981, 1061-1103, 1221-1258, 1312-1338, 1350-1384, 1498-1523, 1654-1675, 1724-1780, and 1827-2055; these read LASEAEDAGGISIKGGQSRERGSL, VTLP…AGQR, YPGQ…DLRS, VGQREAGKPGGAEYEDIGPQ, EEEF…EGMA, TVGSVGGHGRKDSGTAGKVGEGYTEAEPGHSGGLSSWG, STVGTGNWDKARHPGAPSPHEAGSEGH, RDGSGIPEPWSAGDKTAYGEESKGLGPERTGPDGE, ETGRMESKNGVGYRGSSVGPGEMGSE, EWKDDSGFQGSLRDRGTPSEEI, QQGV…ATSH, and GAAG…SMDH. Basic and acidic residues predominate over residues 717 to 742; it reads HPRDRRLESRGEGQEHSEGHGSELDR. Positions 866-880 are enriched in polar residues; it reads GQTSEGNDTQKSSLS. A compositionally biased stretch (gly residues) spans 1070 to 1084; sequence RSQGKGSRGGMGLGG. Positions 1873 to 1882 are enriched in polar residues; it reads SKPQEPQNEL. Composition is skewed to basic and acidic residues over residues 1988–2004 and 2012–2021; these read SEDRGSLREPWSEDRRQ and SRRDTQEGRS. Residues 2034–2137 enclose the Ig-like 3 domain; sequence PRSRYQPGTG…GCQHSEASLT (104 aa). 3 consecutive Fibronectin type-III domains span residues 2244-2339, 2344-2443, and 2445-2540; these read PPQG…VAPE, PPSA…MRPP, and PVRD…AMPA. An Ig-like 4 domain is found at 2544–2628; sequence PRFLMDSGTK…LRNLQGKEAT (85 aa). The Fibronectin type-III 4 domain maps to 2641-2735; that stretch reads APGSIYLQEN…TSQPWCIPRQ (95 aa). An Ig-like 5 domain is found at 2749–2845; that stretch reads PDLSQKPRFL…AVSTATLIVT (97 aa).

In terms of assembly, interacts with FLNC. Interacts with KY. As to expression, isoform 1, isoform 3 and isoform 4 are expressed in skeletal muscle while isoform 2 is detected in both skeletal muscle and heart (at protein level).

The protein localises to the nucleus. It is found in the cytoplasm. Its subcellular location is the myofibril. It localises to the sarcomere. The protein resides in the z line. The sequence is that of Immunoglobulin-like and fibronectin type III domain-containing protein 1 (Igfn1) from Mus musculus (Mouse).